Here is a 135-residue protein sequence, read N- to C-terminus: S-protein homolog 7 (135 aa).

The first 20 residues, 1–20 (MNNLFVLVIIIVLSAGSNNG), serve as a signal peptide directing secretion.

This sequence belongs to the plant self-incompatibility (S1) protein family.

It is found in the secreted. The chain is S-protein homolog 7 from Arabidopsis thaliana (Mouse-ear cress).